The primary structure comprises 1214 residues: Zinc finger E-box-binding homeobox 2 (1214 aa).

The interval 1 to 101 (MKQPIMADGP…GVEHPWHNNE (101 aa)) is disordered. Basic residues predominate over residues 12–24 (CKRRKQANPRRKN). The span at 57–74 (DQETSPASVPNHESSPHV) shows a compositional bias: polar residues. Residues 89–98 (REGGVEHPWH) show a composition bias toward basic and acidic residues. Ser142 bears the Phosphoserine mark. C2H2-type zinc fingers lie at residues 211-234 (LTCP…KYRH), 241-263 (FSCP…MVTH), and 282-304 (FKCT…LRIH). The C2H2-type 4; atypical zinc finger occupies 310–334 (YECPNCKKRFSHSGSYSSHISSKKC). Phosphoserine is present on residues Ser356, Ser360, and Ser364. Lys377 carries the N6-acetyllysine modification. Lys391 participates in a covalent cross-link: Glycyl lysine isopeptide (Lys-Gly) (interchain with G-Cter in SUMO); alternate. Lys391 is covalently cross-linked (Glycyl lysine isopeptide (Lys-Gly) (interchain with G-Cter in SUMO2); alternate). The interval 437–487 (QHLGVGMEAPLLGFPTMNSNLSEVQKVLQIVDNTVSRQKMDCKAEEISKLK) is SMAD-MH2 binding domain. Glycyl lysine isopeptide (Lys-Gly) (interchain with G-Cter in SUMO2) cross-links involve residues Lys479 and Lys555. A C2H2-type 5; atypical zinc finger spans residues 581–605 (FSCQFCKESFPGPIPLHQHERYLCK). Residues Lys611 and Lys632 each participate in a glycyl lysine isopeptide (Lys-Gly) (interchain with G-Cter in SUMO2) cross-link. The segment at residues 644–703 (GMTSPINPYKDHMSVLKAYYAMNMEPNSDELLKISIAVGLPQEFVKEWFEQRKVYQYSNS) is a DNA-binding region (homeobox; atypical). Residue Ser647 is modified to Phosphoserine. Residues 702-715 (NSRSPSLERSSKPL) are compositionally biased toward low complexity. 3 disordered regions span residues 702-740 (NSRS…DSIT), 771-810 (PVEK…SSEE), and 832-857 (ATKN…ENSD). Lys713 participates in a covalent cross-link: Glycyl lysine isopeptide (Lys-Gly) (interchain with G-Cter in SUMO2). 2 positions are modified to phosphoserine: Ser731 and Ser780. 2 stretches are compositionally biased toward low complexity: residues 780–808 (SNTP…SFSS) and 840–854 (SSIS…SSSE). The residue at position 782 (Thr782) is a Phosphothreonine. Residue Ser784 is modified to Phosphoserine. Lys866 is covalently cross-linked (Glycyl lysine isopeptide (Lys-Gly) (interchain with G-Cter in SUMO); alternate). Residue Lys866 forms a Glycyl lysine isopeptide (Lys-Gly) (interchain with G-Cter in SUMO2); alternate linkage. C2H2-type zinc fingers lie at residues 999–1021 (YACD…KYEH) and 1027–1049 (HQCQ…SRLH). A C2H2-type 8; atypical zinc finger spans residues 1055-1076 (YQCDKCGKRFSHSGSYSQHMNH). The segment at 1117–1214 (TPQGYSDSEE…HEEDNMEDGM (98 aa)) is disordered. Ser1122 and Ser1124 each carry phosphoserine. Positions 1127–1155 (RESMPRDGESEKEHEKEGEDGYGKLGRQD) are enriched in basic and acidic residues. Acidic residues predominate over residues 1156–1167 (GDEEFEEEEEES). Basic and acidic residues-rich tracts occupy residues 1168-1179 (ENKSMDTDPETI) and 1186-1205 (GDHS…KSDH). Ser1203 is modified (phosphoserine).

This sequence belongs to the delta-EF1/ZFH-1 C2H2-type zinc-finger family. In terms of assembly, binds activated SMAD1, activated SMAD2 and activated SMAD3; binding with SMAD4 is not detected. Interacts with CBX4 and CTBP1. Sumoylation on Lys-391 and Lys-866 is promoted by the E3 SUMO-protein ligase CBX4, and impairs interaction with CTBP1 and transcription repression activity.

The protein localises to the nucleus. It localises to the chromosome. Its function is as follows. Transcriptional inhibitor that binds to DNA sequence 5'-CACCT-3' in different promoters. Represses transcription of E-cadherin. Represses expression of MEOX2. In Homo sapiens (Human), this protein is Zinc finger E-box-binding homeobox 2.